Consider the following 120-residue polypeptide: NAD(P)H-quinone oxidoreductase subunit 3, chloroplastic (120 aa).

The next 3 membrane-spanning stretches (helical) occupy residues 9-29 (IFWA…FISG), 64-84 (MFAL…PWAM), and 88-108 (VLGV…ILGL).

Belongs to the complex I subunit 3 family. As to quaternary structure, NDH is composed of at least 16 different subunits, 5 of which are encoded in the nucleus.

The protein localises to the plastid. It localises to the chloroplast thylakoid membrane. It catalyses the reaction a plastoquinone + NADH + (n+1) H(+)(in) = a plastoquinol + NAD(+) + n H(+)(out). The enzyme catalyses a plastoquinone + NADPH + (n+1) H(+)(in) = a plastoquinol + NADP(+) + n H(+)(out). NDH shuttles electrons from NAD(P)H:plastoquinone, via FMN and iron-sulfur (Fe-S) centers, to quinones in the photosynthetic chain and possibly in a chloroplast respiratory chain. The immediate electron acceptor for the enzyme in this species is believed to be plastoquinone. Couples the redox reaction to proton translocation, and thus conserves the redox energy in a proton gradient. This Barbarea verna (Land cress) protein is NAD(P)H-quinone oxidoreductase subunit 3, chloroplastic.